Consider the following 456-residue polypeptide: Serine--tRNA ligase (456 aa).

252–254 lines the L-serine pocket; the sequence is TSE. ATP-binding positions include 283–285 and Val-299; that span reads RKE. Residue Glu-306 coordinates L-serine. Residue 370 to 373 coordinates ATP; the sequence is ELVS. Thr-404 contributes to the L-serine binding site.

Belongs to the class-II aminoacyl-tRNA synthetase family. Type-1 seryl-tRNA synthetase subfamily. Homodimer. The tRNA molecule binds across the dimer.

It localises to the cytoplasm. It catalyses the reaction tRNA(Ser) + L-serine + ATP = L-seryl-tRNA(Ser) + AMP + diphosphate + H(+). The enzyme catalyses tRNA(Sec) + L-serine + ATP = L-seryl-tRNA(Sec) + AMP + diphosphate + H(+). It functions in the pathway aminoacyl-tRNA biosynthesis; selenocysteinyl-tRNA(Sec) biosynthesis; L-seryl-tRNA(Sec) from L-serine and tRNA(Sec): step 1/1. Its function is as follows. Catalyzes the attachment of serine to tRNA(Ser). Is also able to aminoacylate tRNA(Sec) with serine, to form the misacylated tRNA L-seryl-tRNA(Sec), which will be further converted into selenocysteinyl-tRNA(Sec). The chain is Serine--tRNA ligase from Korarchaeum cryptofilum (strain OPF8).